The chain runs to 232 residues: Probable proteasome subunit alpha type-5 (232 aa).

The protein belongs to the peptidase T1A family. The 26S proteasome consists of a 20S proteasome core and two 19S regulatory subunits. The 20S proteasome core is composed of 28 subunits that are arranged in four stacked rings, resulting in a barrel-shaped structure. The two end rings are each formed by seven alpha subunits, and the two central rings are each formed by seven beta subunits. The catalytic chamber with the active sites is on the inside of the barrel.

Its subcellular location is the cytoplasm. The protein localises to the nucleus. In terms of biological role, the proteasome degrades poly-ubiquitinated proteins in the cytoplasm and in the nucleus. It is essential for the regulated turnover of proteins and for the removal of misfolded proteins. The proteasome is a multicatalytic proteinase complex that is characterized by its ability to cleave peptides with Arg, Phe, Tyr, Leu, and Glu adjacent to the leaving group at neutral or slightly basic pH. It has an ATP-dependent proteolytic activity. The chain is Probable proteasome subunit alpha type-5 (PUP2) from Encephalitozoon cuniculi (strain GB-M1) (Microsporidian parasite).